A 506-amino-acid chain; its full sequence is BTB/POZ domain-containing protein At3g22104 (506 aa).

Residues 6 to 76 (SDLEVDINGE…CYNDGRVAVM (71 aa)) enclose the BTB domain. Positions 187–435 (TWWFDEVLVL…LDEQQQQQQQ (249 aa)) constitute an NPH3 domain. A coiled-coil region spans residues 421 to 492 (QAIETLDEQQ…MEVIKKRSKS (72 aa)). Positions 485-506 (VIKKRSKSSSKGSNRSLPKLCS) are disordered.

This sequence belongs to the NPH3 family.

Its pathway is protein modification; protein ubiquitination. Functionally, may act as a substrate-specific adapter of an E3 ubiquitin-protein ligase complex (CUL3-RBX1-BTB) which mediates the ubiquitination and subsequent proteasomal degradation of target proteins. This chain is BTB/POZ domain-containing protein At3g22104, found in Arabidopsis thaliana (Mouse-ear cress).